Reading from the N-terminus, the 683-residue chain is Rhophilin-2-B (683 aa).

The 75-residue stretch at 25 to 99 (KSIAQTGRSK…LERLNISVEV (75 aa)) folds into the REM-1 domain. Residues 110-501 (PLIPLGLKET…TDIFQRLGPL (392 aa)) form the BRO1 domain. The PDZ domain maps to 515-592 (KMCITKEDGD…DSIEIQVISI (78 aa)).

The protein belongs to the RHPN family. In terms of assembly, interacts with RhoA.

The protein resides in the cytoplasm. It localises to the perinuclear region. In terms of biological role, binds specifically to GTP-Rho. The chain is Rhophilin-2-B (rhpn2-b) from Xenopus laevis (African clawed frog).